The primary structure comprises 262 residues: Methanethiol S-methyltransferase (262 aa).

The next 5 membrane-spanning stretches (helical) occupy residues 22 to 42, 55 to 75, 100 to 120, 134 to 154, and 195 to 215; these read LYSLLSYLFFLMTLLYLIGFV, PGASWPLALLVDVLLITLFAV, ATYVLASSVVLVVMFWLWQPI, AVLTTLFWLGWGLILVATFLI, and GFLMAFWATPEMTVGHLVFAL.

Belongs to the nurim family.

It is found in the membrane. It catalyses the reaction methanethiol + S-adenosyl-L-methionine = dimethyl sulfide + S-adenosyl-L-homocysteine + H(+). Its function is as follows. Catalyzes the methylation of methanethiol (MeSH) to yield dimethylsulphide (DMS). In Pseudomonas deceptionensis, this protein is Methanethiol S-methyltransferase.